The chain runs to 501 residues: Lysine--tRNA ligase (501 aa).

Mg(2+) is bound by residues Glu-410 and Glu-417.

This sequence belongs to the class-II aminoacyl-tRNA synthetase family. Homodimer. It depends on Mg(2+) as a cofactor.

It is found in the cytoplasm. The catalysed reaction is tRNA(Lys) + L-lysine + ATP = L-lysyl-tRNA(Lys) + AMP + diphosphate. The protein is Lysine--tRNA ligase of Shewanella pealeana (strain ATCC 700345 / ANG-SQ1).